Here is a 677-residue protein sequence, read N- to C-terminus: Probable potassium transport system protein Kup (677 aa).

12 helical membrane passes run 13 to 33, 54 to 74, 98 to 118, 137 to 157, 171 to 191, 217 to 237, 249 to 269, 296 to 316, 345 to 365, 374 to 394, 402 to 422, and 429 to 449; these read GALIAIGIVFGDIGTSPLYTM, VSLVFWTLMLITTIKYVIIAL, WLLLPALIGGAALLADGTLTP, FIFPNNQTIVLFVVTVILLIV, IFGPVMLTWFLFIGFFGLVNI, TGIFILGSVFLATTGAEALYS, VSWIFVYTMLILNYMGQGAWI, IFGVVMAALAAIIASQALISG, MYIGTVNWLLCIIGLIIVWAF, AYGLSITITMLMTTLLLYQFI, ILAFFFVVIFGMIETVFLIAS, and GGYATLIIMVAILSVMMIWFY.

This sequence belongs to the HAK/KUP transporter (TC 2.A.72) family.

Its subcellular location is the cell membrane. It catalyses the reaction K(+)(in) + H(+)(in) = K(+)(out) + H(+)(out). In terms of biological role, transport of potassium into the cell. Likely operates as a K(+):H(+) symporter. The sequence is that of Probable potassium transport system protein Kup from Leuconostoc mesenteroides subsp. mesenteroides (strain ATCC 8293 / DSM 20343 / BCRC 11652 / CCM 1803 / JCM 6124 / NCDO 523 / NBRC 100496 / NCIMB 8023 / NCTC 12954 / NRRL B-1118 / 37Y).